The primary structure comprises 85 residues: F1845 adhesin operon regulatory protein (85 aa).

In terms of biological role, regulates the transcription of genes involved in the biosynthesis of F1845 fimbrial adhesin. This chain is F1845 adhesin operon regulatory protein (daaA), found in Escherichia coli.